Reading from the N-terminus, the 330-residue chain is Complement factor H-related protein 3 (330 aa).

Residues 1–18 (MLLLINVILTLWVSCANG) form the signal peptide. 5 consecutive Sushi domains span residues 22 to 84 (PCDF…VPCL), 85 to 142 (RKCY…RCIR), 144 to 205 (RTCS…ICIN), 208 to 266 (EKCG…RCIH), and 267 to 330 (PCII…PRCE). Cystine bridges form between Cys-23–Cys-72, Cys-55–Cys-83, Cys-87–Cys-129, Cys-114–Cys-140, Cys-146–Cys-192, and Cys-175–Cys-203. Residue Asn-108 is glycosylated (N-linked (GlcNAc...) asparagine). Residues Asn-185 and Asn-205 are each glycosylated (N-linked (GlcNAc...) asparagine). 4 cysteine pairs are disulfide-bonded: Cys-210/Cys-253, Cys-239/Cys-264, Cys-268/Cys-319, and Cys-302/Cys-329. Asn-309 carries N-linked (GlcNAc...) asparagine glycosylation.

Expressed by the liver and secreted in plasma.

It localises to the secreted. In terms of biological role, might be involved in complement regulation. This is Complement factor H-related protein 3 (CFHR3) from Homo sapiens (Human).